Consider the following 62-residue polypeptide: Small ribosomal subunit protein eS17 (62 aa).

The protein belongs to the eukaryotic ribosomal protein eS17 family.

The protein is Small ribosomal subunit protein eS17 of Methanoculleus marisnigri (strain ATCC 35101 / DSM 1498 / JR1).